A 97-amino-acid chain; its full sequence is Carboxypeptidase inhibitor (97 aa).

The first 22 residues, 1 to 22, serve as a signal peptide directing secretion; that stretch reads MAATLPVFAVVFFAMVLASSQA.

The protein localises to the secreted. Functionally, potent competitive inhibitor of metallo-carboxypeptidases CPA1, CPA2, CPB, CPN, and TAF1a. Also inhibits human CPA4. Accelerates fibrinolysis in vitro and may contribute to the maintenance of host blood liquidity during feeding. This chain is Carboxypeptidase inhibitor, found in Rhipicephalus bursa (Tick).